A 126-amino-acid chain; its full sequence is Small ribosomal subunit protein uS12 (126 aa).

Residues 1–28 (MPTIQQLIRSERSKVQKKTKSPALKQCP) form a disordered region. Asp-89 is modified (3-methylthioaspartic acid). The segment at 104 to 126 (ATGVKDRKQGRSKYGTKREKAKK) is disordered. Positions 113 to 126 (GRSKYGTKREKAKK) are enriched in basic residues.

The protein belongs to the universal ribosomal protein uS12 family. In terms of assembly, part of the 30S ribosomal subunit. Contacts proteins S8 and S17. May interact with IF1 in the 30S initiation complex.

Its function is as follows. With S4 and S5 plays an important role in translational accuracy. In terms of biological role, interacts with and stabilizes bases of the 16S rRNA that are involved in tRNA selection in the A site and with the mRNA backbone. Located at the interface of the 30S and 50S subunits, it traverses the body of the 30S subunit contacting proteins on the other side and probably holding the rRNA structure together. The combined cluster of proteins S8, S12 and S17 appears to hold together the shoulder and platform of the 30S subunit. The sequence is that of Small ribosomal subunit protein uS12 from Synechocystis sp. (strain ATCC 27184 / PCC 6803 / Kazusa).